The primary structure comprises 534 residues: Putative fimbrium tip subunit Fim1C (534 aa).

A signal peptide spans 1-21 (MKQYKLMQVALLAILLFGWAG). A lipid anchor (N-palmitoyl cysteine) is attached at Cys-22. Cys-22 carries the S-diacylglycerol cysteine lipid modification. Residues 22-54 (CSQNEEEVPGNVRNGIVLNVTDTGIISNEPSTR) constitute a propeptide that is removed on maturation.

This sequence belongs to the bacteroidetes fimbrillin superfamily. Mfa-like family. In terms of assembly, may be part of the fimbrial tip.

Its subcellular location is the fimbrium. It localises to the cell outer membrane. Its function is as follows. Probably a component of the fimbrium tip. Fimbriae are filamentous appendages on the cell surface that mediate cell adhesion and biofilm formation. The protein is Putative fimbrium tip subunit Fim1C of Bacteroides ovatus (strain ATCC 8483 / DSM 1896 / JCM 5824 / BCRC 10623 / CCUG 4943 / NCTC 11153).